The primary structure comprises 471 residues: Maintenance of mitochondrial morphology protein 1 (471 aa).

Residues 1–21 (MSSPQNTSCPPSQHSLSFTQG) are Lumenal-facing. Residues 22–42 (LLLGQLSVVLLIGAFIKFFIF) form a helical membrane-spanning segment. The Cytoplasmic segment spans residues 43-471 (GESPSSSSRG…GSLPGAPAVA (429 aa)). Positions 128-370 (QPESLDWFNV…EPRVQLVALP (243 aa)) constitute an SMP-LTD domain. 3 disordered regions span residues 271–306 (GTTE…GVRS), 395–415 (EDPA…NRDG), and 448–471 (RGDT…PAVA). Positions 280-295 (PHPENQNESKPSRQDP) are enriched in basic and acidic residues. The segment covering 401-410 (ATHSGFTPVN) has biased composition (polar residues).

Belongs to the MMM1 family. Homodimer. Component of the ER-mitochondria encounter structure (ERMES) or MDM complex, composed of MMM1, MDM10, MDM12 and MDM34. An MMM1 homodimer associates with one molecule of MDM12 on each side in a pairwise head-to-tail manner, and the SMP-LTD domains of MMM1 and MDM12 generate a continuous hydrophobic tunnel for phospholipid trafficking.

It is found in the endoplasmic reticulum membrane. In terms of biological role, component of the ERMES/MDM complex, which serves as a molecular tether to connect the endoplasmic reticulum (ER) and mitochondria. Components of this complex are involved in the control of mitochondrial shape and protein biogenesis, and function in nonvesicular lipid trafficking between the ER and mitochondria. The MDM12-MMM1 subcomplex functions in the major beta-barrel assembly pathway that is responsible for biogenesis of all outer membrane beta-barrel proteins, and acts in a late step after the SAM complex. The MDM10-MDM12-MMM1 subcomplex further acts in the TOM40-specific pathway after the action of the MDM12-MMM1 complex. Essential for establishing and maintaining the structure of mitochondria and maintenance of mtDNA nucleoids. In Arthroderma otae (strain ATCC MYA-4605 / CBS 113480) (Microsporum canis), this protein is Maintenance of mitochondrial morphology protein 1.